A 119-amino-acid chain; its full sequence is Large ribosomal subunit protein bL20 (119 aa).

Belongs to the bacterial ribosomal protein bL20 family.

Functionally, binds directly to 23S ribosomal RNA and is necessary for the in vitro assembly process of the 50S ribosomal subunit. It is not involved in the protein synthesizing functions of that subunit. This is Large ribosomal subunit protein bL20 from Rhodopseudomonas palustris (strain ATCC BAA-98 / CGA009).